Here is a 648-residue protein sequence, read N- to C-terminus: MTTEHAAGAQTLNFQAEVKQLLHLMIHSLYSNREIFLRELVSNASDACDKLRFEALDKPELFEGDSELAIRVGFDSEAKTVTVSDNGIGMSRDEVITHLGTIAKSGTKEFFSQLTGDQKKDAHLIGQFGVGFYSAFIVADKVTVVTRRAGLAAAEGVKWECAMTGDAAGEYTVEAIEKAARGTEITLHLREGQEDLLSGWKLRGLIRKYSDHIVQPILMKKEEWDKDKNEQVTTDEDETVNQANALWTRSRNDITEEEYKGFYKHVGHDFDEPLAWTHARVEGRHEYTQLLYIPSHAPFDMWDRNARHGIKLYVKRVFIMDDAEKLMPAYLRFVRGVVDSSDLPLNVSREILQESKDIDTIRSGCTKKVLGLLESLATSDEAADREKYATFWKEFGPVLKEGVGEDFANKDKIAGLLRFASTHADTPDEVVSLADYLARMKEGQDKIYYVTAESFNAAKNSPHLEIFRKKGIEVLLLTDRVDEWVIGNLPEFDGKALVSVAKGGLDLGKLEDEAEKKETEKAADEYKELLEKMKASLGERVKEVRVTHRLTDSPACLVADEHDVGMNLARILKAAGQQAPASKPILEINPQHPAVMRLKYEERQFDDWAAVLFDQALLAEGGTLDDPATFVKRINQLMMAMGGSAGTD.

Residues 1–349 (MTTEHAAGAQ…SSDLPLNVSR (349 aa)) are a; substrate-binding. The tract at residues 350 to 570 (EILQESKDID…EHDVGMNLAR (221 aa)) is b. The interval 571 to 648 (ILKAAGQQAP…MAMGGSAGTD (78 aa)) is c.

The protein belongs to the heat shock protein 90 family. Homodimer.

Its subcellular location is the cytoplasm. Functionally, molecular chaperone. Has ATPase activity. In Aromatoleum aromaticum (strain DSM 19018 / LMG 30748 / EbN1) (Azoarcus sp. (strain EbN1)), this protein is Chaperone protein HtpG.